The sequence spans 374 residues: Homoserine O-acetyltransferase (374 aa).

Residues 45 to 353 (NAILVLHALT…PYGHDAFLIE (309 aa)) enclose the AB hydrolase-1 domain. S151 functions as the Nucleophile in the catalytic mechanism. Residue R220 participates in substrate binding. Active-site residues include D314 and H347. D348 serves as a coordination point for substrate.

The protein belongs to the AB hydrolase superfamily. MetX family. As to quaternary structure, homodimer.

Its subcellular location is the cytoplasm. It catalyses the reaction L-homoserine + acetyl-CoA = O-acetyl-L-homoserine + CoA. Its pathway is amino-acid biosynthesis; L-methionine biosynthesis via de novo pathway; O-acetyl-L-homoserine from L-homoserine: step 1/1. Its function is as follows. Transfers an acetyl group from acetyl-CoA to L-homoserine, forming acetyl-L-homoserine. This chain is Homoserine O-acetyltransferase, found in Moorella thermoacetica (strain ATCC 39073 / JCM 9320).